A 346-amino-acid chain; its full sequence is tRNA N6-adenosine threonylcarbamoyltransferase (346 aa).

The Fe cation site is built by H111 and H115. Residues 134-138 (LVSGG), D167, G180, and N279 contribute to the substrate site. D307 lines the Fe cation pocket.

The protein belongs to the KAE1 / TsaD family. The cofactor is Fe(2+).

It is found in the cytoplasm. The catalysed reaction is L-threonylcarbamoyladenylate + adenosine(37) in tRNA = N(6)-L-threonylcarbamoyladenosine(37) in tRNA + AMP + H(+). Required for the formation of a threonylcarbamoyl group on adenosine at position 37 (t(6)A37) in tRNAs that read codons beginning with adenine. Is involved in the transfer of the threonylcarbamoyl moiety of threonylcarbamoyl-AMP (TC-AMP) to the N6 group of A37, together with TsaE and TsaB. TsaD likely plays a direct catalytic role in this reaction. The protein is tRNA N6-adenosine threonylcarbamoyltransferase of Burkholderia pseudomallei (strain K96243).